Reading from the N-terminus, the 417-residue chain is MSSTCYPITSFGNLLNKIAKQSLISSQVWNEIVQDLYTAYSVYKYINTTLQYQLFYGNIYTLYDLFNNLDLYILNAKPYPFTPLIQARPGLPLTVNYMNNLINAITKVANENNIALAKPLNFVQSNEIVTSRKINDIIYAINQFLTFDYNTYFLLDCNGSLFNNLINSKSAFLNVLIDNPSQNISTNNIYIKNLIINYLNTFLNFYGSSAIDNLLVGKTYTNFGINTYDNSYIQKIIMYQLYGLIETYNNSYIQKIIVNELNGAIETNDNSYIDTIIVNQLNNAINAFDNSYIKTVIINQFNGSMYILSYIDTIIFTQLSIYLPINTGNHIGNLIINTNYGTVKIYDSTVLQNFIIDTNYQEIDIDEYAIIKNLIINTNYGTVKIYDNAIVENLICKQNYGQIQISGNAQVINNNCQ.

This is an uncharacterized protein from Sulfolobus islandicus rod-shaped virus 1 (SIRV-1).